We begin with the raw amino-acid sequence, 329 residues long: GTP 3',8-cyclase (329 aa).

In terms of domain architecture, Radical SAM core spans 8–234 (AFARKFYYLR…QLRSRADGPA (227 aa)). Residue Arg-17 participates in GTP binding. [4Fe-4S] cluster-binding residues include Cys-24 and Cys-28. Tyr-30 contacts S-adenosyl-L-methionine. [4Fe-4S] cluster is bound at residue Cys-31. Arg-68 serves as a coordination point for GTP. Gly-72 contacts S-adenosyl-L-methionine. Thr-99 is a binding site for GTP. Ser-123 provides a ligand contact to S-adenosyl-L-methionine. Position 160 (Lys-160) interacts with GTP. An S-adenosyl-L-methionine-binding site is contributed by Met-194. The [4Fe-4S] cluster site is built by Cys-257 and Cys-260. A GTP-binding site is contributed by 262–264 (RLR). Residue Cys-274 coordinates [4Fe-4S] cluster.

It belongs to the radical SAM superfamily. MoaA family. In terms of assembly, monomer and homodimer. [4Fe-4S] cluster serves as cofactor.

It carries out the reaction GTP + AH2 + S-adenosyl-L-methionine = (8S)-3',8-cyclo-7,8-dihydroguanosine 5'-triphosphate + 5'-deoxyadenosine + L-methionine + A + H(+). The protein operates within cofactor biosynthesis; molybdopterin biosynthesis. Its function is as follows. Catalyzes the cyclization of GTP to (8S)-3',8-cyclo-7,8-dihydroguanosine 5'-triphosphate. The chain is GTP 3',8-cyclase from Cronobacter sakazakii (strain ATCC BAA-894) (Enterobacter sakazakii).